Consider the following 419-residue polypeptide: MIDLKLLRENPDAVRRSQLSRGEDPALVDALLTADAARRAVISTADSLRAEQKAASKSVGGASPEERPPLLRRAKELAEQVKAAEADEVEAEAAFTAAHLAISNVIVDGVPAGGEDDYAVLDVVGEPSYLENPKDHLELGESLGLIDMQRGAKVSGSRFYFLTGRGALLQLGLLQLALKLAVDNGFVPTIPPVLVRPEVMVGTGFLGAHAEEVYRVEGDGLYLVGTSEVPLAGYHSGEILDLSRGPLRYAGWSSCFRREAGSHGKDTRGIIRVHQFDKVEGFVYCTPADAEHEHERLLGWQRQMLARIEVPYRVIDVAAGDLGSSAARKFDCEAWIPTQGAYRELTSTSNCTTFQARRLATRYRDASGKPQIAATLNGTLATTRWLVAILENHQRPDGSVRVPDALVPFVGVEVLEPVA.

226–228 (TSE) contacts L-serine. Residues 257–259 (RRE) and Val273 contribute to the ATP site. Glu280 is an L-serine binding site. 344–347 (ELTS) is an ATP binding site. Thr379 contacts L-serine.

This sequence belongs to the class-II aminoacyl-tRNA synthetase family. Type-1 seryl-tRNA synthetase subfamily. As to quaternary structure, homodimer. The tRNA molecule binds across the dimer.

It is found in the cytoplasm. The catalysed reaction is tRNA(Ser) + L-serine + ATP = L-seryl-tRNA(Ser) + AMP + diphosphate + H(+). It catalyses the reaction tRNA(Sec) + L-serine + ATP = L-seryl-tRNA(Sec) + AMP + diphosphate + H(+). It functions in the pathway aminoacyl-tRNA biosynthesis; selenocysteinyl-tRNA(Sec) biosynthesis; L-seryl-tRNA(Sec) from L-serine and tRNA(Sec): step 1/1. Catalyzes the attachment of serine to tRNA(Ser). Is also able to aminoacylate tRNA(Sec) with serine, to form the misacylated tRNA L-seryl-tRNA(Sec), which will be further converted into selenocysteinyl-tRNA(Sec). The sequence is that of Serine--tRNA ligase from Mycobacterium tuberculosis (strain CDC 1551 / Oshkosh).